Reading from the N-terminus, the 608-residue chain is MQFQTEVNQLLQLMIHSLYSNKEIFLRELISNASDALDKLNFLSVSDDKYKSLKFEPKIEIKIDKDKKTLSISDNGIGMDKNDLINNLGTIAKSGTKSFLENLSGDAKKDSQLIGQFGVGFYSAFMVASKIEVLSKKALDDKAYLWSSDANGYEINDASKEEQGTSITLYLKDDEFAHAYKIENIIEKYSNHIQFPIFMEKEEFTPAKEGEEEGKTELKISQINKANALWRMQKSSLKAEDYERFYEQNFHDSNKPLLYLHTKSEGKLEYNSLFFIPQNAPFDLFRVDYQSGLKLYVKRVFISDDDKELLPTYLRFVRGIIDVEDLPLNVSREILQENQILKGVKEASVKKILGELEKLKNNDKEKYLSFFKTFGKVLKEGLYGFGGEKDSLLKLMLYKSTKGENLRSLEEYKNDLQGEQKEIFYIAGNNESLLRTSPLLEEYKQKNIEVLLMDDEIDSLVTPMLEFEGLKFVAINQVEDKNELSDEEKNTFAPLVAKFKELLKDQVEDVRLTSRLKDSPSCIVYDKNKLDFAMQQLLKQMGQEQNFKPILEINPKHAIFTGLKNNETFSADIATLVLNMAKLSEGMGVDNPAEFNASLTKIINKAFS.

Residues 1–332 (MQFQTEVNQL…VEDLPLNVSR (332 aa)) form an a; substrate-binding region. The tract at residues 333-536 (EILQENQILK…KNKLDFAMQQ (204 aa)) is b. The c stretch occupies residues 537–608 (LLKQMGQEQN…LTKIINKAFS (72 aa)).

It belongs to the heat shock protein 90 family. As to quaternary structure, homodimer.

The protein localises to the cytoplasm. In terms of biological role, molecular chaperone. Has ATPase activity. The polypeptide is Chaperone protein HtpG (Campylobacter jejuni subsp. doylei (strain ATCC BAA-1458 / RM4099 / 269.97)).